Here is a 132-residue protein sequence, read N- to C-terminus: Large ribosomal subunit protein bL12 (132 aa).

The segment at 112-132 (KEAADKAKTQLEGAGGTINLK) is disordered.

Belongs to the bacterial ribosomal protein bL12 family. As to quaternary structure, homodimer. Part of the ribosomal stalk of the 50S ribosomal subunit. Forms a multimeric L10(L12)X complex, where L10 forms an elongated spine to which 2 to 4 L12 dimers bind in a sequential fashion. Binds GTP-bound translation factors.

Its function is as follows. Forms part of the ribosomal stalk which helps the ribosome interact with GTP-bound translation factors. Is thus essential for accurate translation. This is Large ribosomal subunit protein bL12 from Leifsonia xyli subsp. xyli (strain CTCB07).